An 80-amino-acid chain; its full sequence is UPF0057 membrane protein ZK632.10 (80 aa).

A run of 2 helical transmembrane segments spans residues 4 to 24 (ILLA…DVGC) and 32 to 52 (ILLT…IILC).

This sequence belongs to the UPF0057 (PMP3) family.

The protein resides in the membrane. The polypeptide is UPF0057 membrane protein ZK632.10 (Caenorhabditis elegans).